Here is a 188-residue protein sequence, read N- to C-terminus: GMP synthase [glutamine-hydrolyzing] subunit A (188 aa).

The 188-residue stretch at 1–188 folds into the Glutamine amidotransferase type-1 domain; the sequence is MIIIMDNGGQ…RNFAKICGEL (188 aa). The active-site Nucleophile is the Cys78. Active-site residues include His165 and Glu167.

In terms of assembly, heterodimer composed of a glutamine amidotransferase subunit (A) and a GMP-binding subunit (B).

It carries out the reaction XMP + L-glutamine + ATP + H2O = GMP + L-glutamate + AMP + diphosphate + 2 H(+). It functions in the pathway purine metabolism; GMP biosynthesis; GMP from XMP (L-Gln route): step 1/1. Its function is as follows. Catalyzes the synthesis of GMP from XMP. This is GMP synthase [glutamine-hydrolyzing] subunit A from Pyrococcus furiosus (strain ATCC 43587 / DSM 3638 / JCM 8422 / Vc1).